A 177-amino-acid chain; its full sequence is Peptide deformylase (177 aa).

Fe cation is bound by residues cysteine 99 and histidine 141. Glutamate 142 is a catalytic residue. Histidine 145 contributes to the Fe cation binding site.

This sequence belongs to the polypeptide deformylase family. The cofactor is Fe(2+).

The enzyme catalyses N-terminal N-formyl-L-methionyl-[peptide] + H2O = N-terminal L-methionyl-[peptide] + formate. In terms of biological role, removes the formyl group from the N-terminal Met of newly synthesized proteins. Requires at least a dipeptide for an efficient rate of reaction. N-terminal L-methionine is a prerequisite for activity but the enzyme has broad specificity at other positions. The protein is Peptide deformylase of Rhizorhabdus wittichii (strain DSM 6014 / CCUG 31198 / JCM 15750 / NBRC 105917 / EY 4224 / RW1) (Sphingomonas wittichii).